The following is a 566-amino-acid chain: Solute carrier family 2, facilitated glucose transporter member 9 (566 aa).

Positions 1 to 31 (MARKQNRNSKELGLAPLADDTSHAGPPGPGR) are disordered. Over 1-51 (MARKQNRNSKELGLAPLADDTSHAGPPGPGRALLECDHLRSGLPDGRRRKD) the chain is Cytoplasmic. Residue serine 9 is modified to Phosphoserine. Residues 52 to 72 (WSCSLLVASLAGAFGSSFLYG) form a helical membrane-spanning segment. Topologically, residues 73 to 107 (YNLSVVNAPTPYIKAFYNESWERRHGRPIDPDTLT) are extracellular. 2 N-linked (GlcNAc...) asparagine glycosylation sites follow: asparagine 74 and asparagine 90. The chain crosses the membrane as a helical span at residues 108 to 128 (LLWSVTVSIFAIGGLVGTLMV). Topologically, residues 129 to 140 (KMIGKVLGRKHT) are cytoplasmic. Residues 141–161 (LLANNGFAISAALLMACSLQA) form a helical membrane-spanning segment. The Extracellular portion of the chain corresponds to 162–171 (GAFEMLIVGR). A helical transmembrane segment spans residues 172-192 (FIMGIDGGIALSVLPMYLSEI). Topologically, residues 193–200 (SPKEIRGS) are cytoplasmic. A helical membrane pass occupies residues 201 to 221 (LGQVTAIFICIGVFTGQLLGL). The Extracellular portion of the chain corresponds to 222–231 (PELLGKESTW). A helical transmembrane segment spans residues 232–252 (PYLFGVIVVPAVVQLLSLPFL). Topologically, residues 253–316 (PDSPRYLLLE…LRAPYVRWQV (64 aa)) are cytoplasmic. The chain crosses the membrane as a helical span at residues 317–337 (VTVIVTMACYQLCGLNAIWFY). Residues 338 to 354 (TNSIFGKAGIPPAKIPY) lie on the Extracellular side of the membrane. The chain crosses the membrane as a helical span at residues 355 to 375 (VTLSTGGIETLAAIFSGLVIE). Topologically, residues 376–381 (HLGRRP) are cytoplasmic. Residues 382–402 (LLIGGFGLMALFFGTLTVTLT) traverse the membrane as a helical segment. Residues 403 to 415 (LQDRAPWVPYLSI) lie on the Extracellular side of the membrane. Residues 416 to 436 (VGILAIIASFCSGPGGIPFIL) traverse the membrane as a helical segment. Residues 437–451 (TGEFFQQSQRPAAFI) lie on the Cytoplasmic side of the membrane. A helical membrane pass occupies residues 452-472 (IAGTVNWLSNFAVGLLFPFIQ). At 473-478 (KSLDTY) the chain is on the extracellular side. Residues 479 to 499 (CFLVFATICMTGAIYLYFVLP) traverse the membrane as a helical segment. Residues 500–566 (ETKNRTYAEI…YMDDLTFQET (67 aa)) lie on the Cytoplasmic side of the membrane. Serine 514 is modified (phosphoserine). A compositionally biased stretch (basic and acidic residues) spans 524–539 (EKIDSAVTDGKTKGRP). The segment at 524-543 (EKIDSAVTDGKTKGRPEQVS) is disordered.

The protein belongs to the major facilitator superfamily. Sugar transporter (TC 2.A.1.1) family.

It localises to the basolateral cell membrane. The protein resides in the apical cell membrane. The enzyme catalyses urate(out) = urate(in). Functionally, high-capacity urate transporter, which may play a role in the urate reabsorption by proximal tubules. May have a residual high-affinity, low-capacity glucose and fructose transporter activity. Transports urate at rates 45- to 60-fold faster than glucose. Does not transport galactose. May mediate small uptake of adenine but not of other nucleobases. The protein is Solute carrier family 2, facilitated glucose transporter member 9 of Pongo abelii (Sumatran orangutan).